A 209-amino-acid polypeptide reads, in one-letter code: Probable septum site-determining protein MinC (209 aa).

Belongs to the MinC family. As to quaternary structure, interacts with MinD and FtsZ.

Functionally, cell division inhibitor that blocks the formation of polar Z ring septums. Rapidly oscillates between the poles of the cell to destabilize FtsZ filaments that have formed before they mature into polar Z rings. Prevents FtsZ polymerization. The polypeptide is Probable septum site-determining protein MinC (Clostridium kluyveri (strain NBRC 12016)).